Reading from the N-terminus, the 160-residue chain is UPF0260 protein GDI1595/Gdia_1801 (160 aa).

The protein belongs to the UPF0260 family.

The sequence is that of UPF0260 protein GDI1595/Gdia_1801 from Gluconacetobacter diazotrophicus (strain ATCC 49037 / DSM 5601 / CCUG 37298 / CIP 103539 / LMG 7603 / PAl5).